The primary structure comprises 291 residues: 4-hydroxy-tetrahydrodipicolinate synthase (291 aa).

A pyruvate-binding site is contributed by Thr-45. The Proton donor/acceptor role is filled by Tyr-133. Lys-161 acts as the Schiff-base intermediate with substrate in catalysis. Position 203 (Ile-203) interacts with pyruvate.

The protein belongs to the DapA family. In terms of assembly, homotetramer; dimer of dimers.

It localises to the cytoplasm. It catalyses the reaction L-aspartate 4-semialdehyde + pyruvate = (2S,4S)-4-hydroxy-2,3,4,5-tetrahydrodipicolinate + H2O + H(+). It participates in amino-acid biosynthesis; L-lysine biosynthesis via DAP pathway; (S)-tetrahydrodipicolinate from L-aspartate: step 3/4. Functionally, catalyzes the condensation of (S)-aspartate-beta-semialdehyde [(S)-ASA] and pyruvate to 4-hydroxy-tetrahydrodipicolinate (HTPA). This Teredinibacter turnerae (strain ATCC 39867 / T7901) protein is 4-hydroxy-tetrahydrodipicolinate synthase.